The chain runs to 651 residues: Macrolide export ATP-binding/permease protein MacB (651 aa).

One can recognise an ABC transporter domain in the interval 2–239; sequence IEIVNVTKTY…PQMPQGGMEA (238 aa). 38 to 45 is a binding site for ATP; it reads GASGSGKS. The next 4 helical transmembrane spans lie at 269–289, 532–552, 589–609, and 614–634; these read FLSV…MALG, IAAI…LVSV, IIGI…AGWA, and MFSV…FGLW.

It belongs to the ABC transporter superfamily. Macrolide exporter (TC 3.A.1.122) family. Homodimer.

It is found in the cell inner membrane. Its function is as follows. Non-canonical ABC transporter that contains transmembrane domains (TMD), which form a pore in the inner membrane, and an ATP-binding domain (NBD), which is responsible for energy generation. Confers resistance against macrolides. The chain is Macrolide export ATP-binding/permease protein MacB from Chlorobaculum tepidum (strain ATCC 49652 / DSM 12025 / NBRC 103806 / TLS) (Chlorobium tepidum).